We begin with the raw amino-acid sequence, 88 residues long: Small ribosomal subunit protein uS17 (88 aa).

The protein belongs to the universal ribosomal protein uS17 family. Part of the 30S ribosomal subunit.

One of the primary rRNA binding proteins, it binds specifically to the 5'-end of 16S ribosomal RNA. This Synechococcus sp. (strain WH7803) protein is Small ribosomal subunit protein uS17.